The following is a 1384-amino-acid chain: ATP-dependent RNA helicase TDRD9 (1384 aa).

Residues 35 to 60 form a disordered region; it reads EAPREEVQRSEEVPSEAPTAQAQDPV. Over residues 36–46 the composition is skewed to basic and acidic residues; that stretch reads APREEVQRSEE. One can recognise a Helicase ATP-binding domain in the interval 144 to 310; the sequence is ISLIESNSVV…FAVPVQNKMN (167 aa). 157–164 lines the ATP pocket; the sequence is GATGSGKS. The DEAH box motif lies at 256–259; the sequence is DEVH. The region spanning 379–546 is the Helicase C-terminal domain; that stretch reads SGAQFVSERS…VLKVKLLDMG (168 aa). Positions 946–1006 constitute a Tudor domain; it reads HPHPDLVCLA…REIPCQLLEL (61 aa).

Belongs to the DEAD box helicase family. DEAH subfamily. As to quaternary structure, interacts with piRNA-associated proteins PIWIL1 and PIWIL4.

The protein localises to the cytoplasm. It is found in the nucleus. It catalyses the reaction ATP + H2O = ADP + phosphate + H(+). In terms of biological role, ATP-binding RNA helicase which plays a central role during spermatogenesis by repressing transposable elements and preventing their mobilization, which is essential for the germline integrity. Acts via the piRNA metabolic process, which mediates the repression of transposable elements during meiosis by forming complexes composed of piRNAs and Piwi proteins and governs the methylation and subsequent repression of transposons. Acts downstream of piRNA biogenesis: exclusively required for transposon silencing in the nucleus, suggesting that it acts as a nuclear effector in the nucleus together with PIWIL4. The chain is ATP-dependent RNA helicase TDRD9 from Rattus norvegicus (Rat).